The following is a 62-amino-acid chain: Photosystem II reaction center protein Z (62 aa).

Helical transmembrane passes span 8-28 (AVFA…VVFA) and 41-61 (FSGT…NSLI).

This sequence belongs to the PsbZ family. In terms of assembly, PSII is composed of 1 copy each of membrane proteins PsbA, PsbB, PsbC, PsbD, PsbE, PsbF, PsbH, PsbI, PsbJ, PsbK, PsbL, PsbM, PsbT, PsbY, PsbZ, Psb30/Ycf12, at least 3 peripheral proteins of the oxygen-evolving complex and a large number of cofactors. It forms dimeric complexes.

Its subcellular location is the plastid. It is found in the chloroplast thylakoid membrane. May control the interaction of photosystem II (PSII) cores with the light-harvesting antenna, regulates electron flow through the 2 photosystem reaction centers. PSII is a light-driven water plastoquinone oxidoreductase, using light energy to abstract electrons from H(2)O, generating a proton gradient subsequently used for ATP formation. In Liriodendron tulipifera (Tuliptree), this protein is Photosystem II reaction center protein Z.